Consider the following 238-residue polypeptide: RAD9, HUS1, RAD1-interacting nuclear orphan protein 1 (238 aa).

Residues 1 to 10 (MPPRKKRRQP) show a composition bias toward basic residues. The segment at 1 to 31 (MPPRKKRRQPSQKAPLLFHQQPLEGPKHSCA) is disordered. At serine 51 the chain carries Phosphoserine; by PLK1. Residues 55–61 (SWVSPDF) carry the RAD1-binding motif motif. Residues 74–105 (KHQNRARHSSRKPTTSKFPHLTFESPQSSSSE) are disordered. Basic residues predominate over residues 75–84 (HQNRARHSSR). A D-box motif is present at residues 125 to 132 (RRPLVPVL). A KEN box motif is present at residues 174–178 (QKENS).

As to quaternary structure, interacts (when phosphorylated by PLK1) with POLQ; promoting POLQ recruitment to DNA damage sites. Interacts with RAD1; interaction is direct and promotes association with the 9-1-1 (RAD9-RAD1-HUS1) complex. Interacts with RAD18. Interacts with TOPBP1. Interacts with UBE2N. Phosphorylated at Ser-51 by PLK1, promoting interaction with polymerase theta (POLQ). Post-translationally, ubiquitinated and degraded by the APC/C complex upon mitotic exit. In terms of tissue distribution, weakly expressed in testis, prostate, ovary, thymus and small intestine. Expressed strongly in breast cancer cells.

Its subcellular location is the nucleus. The protein resides in the chromosome. Functionally, involved in microhomology-mediated end-joining (MMEJ) DNA repair by promoting recruitment of polymerase theta (POLQ) to DNA damage sites during mitosis. MMEJ is an alternative non-homologous end-joining (NHEJ) machinery that takes place during mitosis to repair double-strand breaks in DNA that originate in S-phase. Accumulates in M-phase; following phosphorylation by PLK1, interacts with POLQ, enabling its recruitment to double-strand breaks for subsequent repair. Also involved in the DNA damage response (DDR) signaling in response to genotoxic stresses such as ionizing radiation (IR) during the S phase. Recruited to sites of DNA damage through interaction with the 9-1-1 cell-cycle checkpoint response complex and TOPBP1 in a ATR-dependent manner. Required for the progression of the G1 to S phase transition. Plays a role in the stimulation of CHEK1 phosphorylation. This chain is RAD9, HUS1, RAD1-interacting nuclear orphan protein 1, found in Homo sapiens (Human).